The primary structure comprises 184 residues: NADH-quinone oxidoreductase subunit B 1 (184 aa).

Residues cysteine 37, cysteine 38, cysteine 103, and cysteine 132 each contribute to the [4Fe-4S] cluster site.

Belongs to the complex I 20 kDa subunit family. NDH-1 is composed of 14 different subunits. Subunits NuoB, C, D, E, F, and G constitute the peripheral sector of the complex. It depends on [4Fe-4S] cluster as a cofactor.

It is found in the cell membrane. It carries out the reaction a quinone + NADH + 5 H(+)(in) = a quinol + NAD(+) + 4 H(+)(out). Its function is as follows. NDH-1 shuttles electrons from NADH, via FMN and iron-sulfur (Fe-S) centers, to quinones in the respiratory chain. The immediate electron acceptor for the enzyme in this species is believed to be a menaquinone. Couples the redox reaction to proton translocation (for every two electrons transferred, four hydrogen ions are translocated across the cytoplasmic membrane), and thus conserves the redox energy in a proton gradient. The chain is NADH-quinone oxidoreductase subunit B 1 from Streptomyces coelicolor (strain ATCC BAA-471 / A3(2) / M145).